A 156-amino-acid chain; its full sequence is Endogenous retrovirus group K member 19 Pro protein (156 aa).

A Peptidase A2 domain is found at 21–96; sequence FEGLVDTGAD…IPLNLWGRDL (76 aa). Residue Asp-26 is part of the active site. A G-patch domain is found at 111 to 156; the sequence is YSPTSQKIMTKMGYILGKGLGKNEDGIKIPVEAKINQKREGIGYPF.

The protein belongs to the peptidase A2 family. HERV class-II K(HML-2) subfamily. As to quaternary structure, active as a homodimer. In terms of processing, autoproteolytically processed at the N-terminus. Expected C-terminal autoprocessing not detected. The sequence shown is that of the processed Pro protein.

It carries out the reaction Processing at the authentic HIV-1 PR recognition site and release of the mature p17 matrix and the p24 capsid protein, as a result of the cleavage of the -SQNY-|-PIVQ- cleavage site.. Functionally, retroviral proteases have roles in the processing of the primary translation products and the maturation of the viral particle. Endogenous Pro proteins may have kept, lost or modified their original function during evolution. The protein is Endogenous retrovirus group K member 19 Pro protein (ERVK-19) of Homo sapiens (Human).